Here is an 89-residue protein sequence, read N- to C-terminus: MAHKKAGGSSRNGRDSESKRLGVKKFGGEAVIAGNIIIRQRGTRWHPGENVGIGKDHTLFSLANGTVSFRTKVNNRSYVSVIPAAVEAK.

The disordered stretch occupies residues 1 to 20 (MAHKKAGGSSRNGRDSESKR).

It belongs to the bacterial ribosomal protein bL27 family.

In Bartonella bacilliformis (strain ATCC 35685 / KC583 / Herrer 020/F12,63), this protein is Large ribosomal subunit protein bL27.